Consider the following 112-residue polypeptide: Putative RNase TTE0752 (112 aa).

Catalysis depends on residues Arg-74 and His-79. Positions 74 to 81 (RDKLIHEY) match the RX(4)HXY motif motif. Tyr-81 is modified (O-di-AMP-tyrosine).

The protein belongs to the HepT RNase toxin family. As to quaternary structure, homodimer, probably forms a complex with cognate antitoxin TTE0751. Modified by cognate antitoxin TTE0751; probably at least 2 successive AMPylation events occur on Tyr-81.

Functionally, probable toxic component of a putative type VII toxin-antitoxin (TA) system, probably an RNase. Probably neutralized by cognate antitoxin TTE0751. Neutralization may be due to AMPylation by TTE0751. The polypeptide is Putative RNase TTE0752 (Caldanaerobacter subterraneus subsp. tengcongensis (strain DSM 15242 / JCM 11007 / NBRC 100824 / MB4) (Thermoanaerobacter tengcongensis)).